A 469-amino-acid chain; its full sequence is MTRPVRTRFAPSPTGFIHLGNIRSALYPWAFARKMKGTFVLRIEDTDVERSSQEAVDAILEGMQWLGLDFDEGPIYQMQRMDRYREVLAQMLEKGLAYPCYMSAEELDALRERQREAGLKPRYDGTWRPEPGKVLPEPPAGVKPVLRFRNPLTGTVVWDDAVKGRVEISNEELDDLVIARPDGTPIYNFCVVVDDMDMGITHVIRGDDHVNNTPRQINILNALGGEPPVYAHLPTVLNEQGEKMSKRHGAMSVMAYRDAGFLPEAVVNYLARLGWSHGDAEIFSREQFVEWFDLEHLGKSPAQYDHSKLSWLNAHYIKEADNARLAELAKPFLDALGIDDAAIATGPALDAVVGLMKDRATTVKEIAEGAAMFYRVPAPDADALAQHVTDAVRPALADLAAALKAADWTKEAVSAALKATLATHKLKMPQLAMPVRLLVAGTTHTPSIDAVLVLFGRDVVVTRIEAALA.

The 'HIGH' region motif lies at 11 to 21 (PSPTGFIHLGN). The 'KMSKS' region motif lies at 243–247 (KMSKR). Lys246 contacts ATP.

Belongs to the class-I aminoacyl-tRNA synthetase family. Glutamate--tRNA ligase type 1 subfamily. Monomer.

Its subcellular location is the cytoplasm. It catalyses the reaction tRNA(Glu) + L-glutamate + ATP = L-glutamyl-tRNA(Glu) + AMP + diphosphate. Its function is as follows. Catalyzes the attachment of glutamate to tRNA(Glu) in a two-step reaction: glutamate is first activated by ATP to form Glu-AMP and then transferred to the acceptor end of tRNA(Glu). This is Glutamate--tRNA ligase from Burkholderia cenocepacia (strain HI2424).